Reading from the N-terminus, the 301-residue chain is Cuticle collagen 1 (301 aa).

A signal peptide spans 1 to 37 (METDGRLKAYKFVAYAAVGFSIAAVASVLLTLPMVYS). Positions 79–82 (RTTR) are furin-like endopeptidase recognition region. Triple-helical region stretches follow at residues 105 to 134 (GPPGPAGAPGKPGKPGRPGAPGTPGTPGKP), 153 to 179 (GPPGPPGPPGAPGDPGEAGTPGRPGTD), 183 to 209 (GSPGPRGPPGPAGEAGAPGPAGEPGTP), and 218 to 283 (GAPG…KGIC). The disordered stretch occupies residues 109 to 284 (PAGAPGKPGK…GTPGEKGICP (176 aa)). 2 stretches are compositionally biased toward pro residues: residues 131–164 (PGKPPVAPCEPTTPPPCKPCPQGPPGPPGPPGAP) and 184–193 (SPGPRGPPGP). Positions 194–210 (AGEAGAPGPAGEPGTPA) are enriched in low complexity. Pro residues predominate over residues 226–258 (SGPPGPPGPPGAPGNDGPPGPPGPKGAPGPDGP).

This sequence belongs to the cuticular collagen family. In terms of assembly, collagen polypeptide chains are complexed within the cuticle by disulfide bonds and other types of covalent cross-links.

The protein localises to the secreted. It localises to the extracellular space. Its function is as follows. Secreted collagen that forms part of the nematode cuticle, which functions as an exoskeleton and a barrier to protect the worm from its environment. Secretion and subsequent incorporation into the cuticle is likely mediated by bli-4, which probably cleaves at the N-terminal consensus furin cleavage site. This chain is Cuticle collagen 1 (sqt-3), found in Caenorhabditis elegans.